The sequence spans 214 residues: Osteoclast-stimulating factor 1 (214 aa).

An N-acetylserine modification is found at Ser-2. The SH3 domain occupies 12–71; that stretch reads GQVKVFRALYTFEPRTPDELYFEEGDIIYITDMSDTNWWKGTSKGRTGLIPSNYVAEQAE. ANK repeat units follow at residues 72 to 101, 105 to 135, and 139 to 168; these read SIDN…GVNG, AGST…ELNQ, and LGDT…RTDL. The residue at position 200 (Thr-200) is a Phosphothreonine. Phosphoserine is present on residues Ser-202 and Ser-213.

Interacts with SRC and SMN1. Interacts with FASLG.

It is found in the cytoplasm. Functionally, induces bone resorption, acting probably through a signaling cascade which results in the secretion of factor(s) enhancing osteoclast formation and activity. In Sus scrofa (Pig), this protein is Osteoclast-stimulating factor 1 (OSTF1).